The chain runs to 112 residues: Virion protein 6 (112 aa).

The protein localises to the virion. The sequence is that of Virion protein 6 from Enterococcus phage phiEF24C (Enterococcus bacteriophage phi-EF24C).